Consider the following 435-residue polypeptide: Ornithine decarboxylase (435 aa).

Residue Lys-98 is modified to N6-(pyridoxal phosphate)lysine. Pyridoxal 5'-phosphate is bound by residues Ser-230, Gly-268, and 301 to 304 (EPGR). 344–345 (YD) is a substrate binding site. Cys-380 functions as the Proton donor; shared with dimeric partner in the catalytic mechanism. Asp-381 lines the substrate pocket. Tyr-409 serves as a coordination point for pyridoxal 5'-phosphate.

It belongs to the Orn/Lys/Arg decarboxylase class-II family. Homodimer. Only the dimer is catalytically active, as the active sites are constructed of residues from both monomers. Pyridoxal 5'-phosphate serves as cofactor.

The catalysed reaction is L-ornithine + H(+) = putrescine + CO2. The protein operates within amine and polyamine biosynthesis; putrescine biosynthesis via L-ornithine pathway; putrescine from L-ornithine: step 1/1. Inhibited by antizyme (AZ) in response to polyamine levels. AZ inhibits the assembly of the functional homodimer by binding to ODC monomers and targeting them for ubiquitin-independent proteolytic destruction by the 26S proteasome. In terms of biological role, catalyzes the first and rate-limiting step of polyamine biosynthesis that converts ornithine into putrescine, which is the precursor for the polyamines, spermidine and spermine. Polyamines are essential for cell proliferation and are implicated in cellular processes, ranging from DNA replication to apoptosis. The protein is Ornithine decarboxylase (ODC) of Capsicum annuum (Capsicum pepper).